The chain runs to 544 residues: MTPAELKRLYHIIKVQLEYGLDELLPDHQLTKAPLLMRKSLFWIKNQHPEKPLGERLRLALQELGPVWIKFGQMMSTRRDLFPPHIADPLALLQDQVAPFDGELAKQQMEKALGGPLENWFTEFDIKPLASASIAQVHTARLKDTNQEVVLKVIRPDIRPVIDSDLKLMHRMARIVAGAMPEARRLKPVEVVREYEKTLLDELDLRREAANAIQLRRNFEGSEELYVPEVFPDFSNETVMVSERIYGIQVSDIEGLEANGTNMKLLAERGVSVFFTQVFRDSFFHADMHPGNVFVKPEHPENPMWIGLDCGIVGTLNSEDKRYLAENFLAFFNRDYRRVAELHVDSGWVPADTNVDEFEFAIRIVCEPIFAKPLCEISFGHVLLNLFNTARRFNMEVQPQLVLLQKTLLYVEGLGRQLYPQLDLWETAKPFLEEWMMNQVGPQALVNSIKDRAPFWAEKLPELPELLYDSLKQGKAMNQRMDLLYQGYRQSKRQQATGKFLFGVGATLVVCSAILVDNAYEQLSMASGIAGVTFWLLSWRAYRQ.

In terms of domain architecture, Protein kinase spans 123–501; that stretch reads EFDIKPLASA…KRQQATGKFL (379 aa). ATP is bound by residues 129 to 137 and Lys-152; that span reads LASASIAQV. The active-site Proton acceptor is the Asp-287. A run of 2 helical transmembrane segments spans residues 496–516 and 519–539; these read ATGK…AILV and AYEQ…LLSW.

Belongs to the ABC1 family. UbiB subfamily.

It is found in the cell inner membrane. It participates in cofactor biosynthesis; ubiquinone biosynthesis [regulation]. Functionally, is probably a protein kinase regulator of UbiI activity which is involved in aerobic coenzyme Q (ubiquinone) biosynthesis. This is Probable protein kinase UbiB from Vibrio parahaemolyticus serotype O3:K6 (strain RIMD 2210633).